The chain runs to 470 residues: Ribosomal protein uS12 methylthiotransferase RimO (470 aa).

In terms of domain architecture, MTTase N-terminal spans 33-143 (NKIGFVSLGC…VLEHVHQYAP (111 aa)). 6 residues coordinate [4Fe-4S] cluster: Cys42, Cys78, Cys107, Cys175, Cys179, and Cys182. The 238-residue stretch at 161-398 (LTPKHYAYLK…MLVQQEISAA (238 aa)) folds into the Radical SAM core domain. The 67-residue stretch at 401-467 (QKRIGSTMQV…EYDLWGSILH (67 aa)) folds into the TRAM domain.

The protein belongs to the methylthiotransferase family. RimO subfamily. It depends on [4Fe-4S] cluster as a cofactor.

The protein localises to the cytoplasm. It catalyses the reaction L-aspartate(89)-[ribosomal protein uS12]-hydrogen + (sulfur carrier)-SH + AH2 + 2 S-adenosyl-L-methionine = 3-methylsulfanyl-L-aspartate(89)-[ribosomal protein uS12]-hydrogen + (sulfur carrier)-H + 5'-deoxyadenosine + L-methionine + A + S-adenosyl-L-homocysteine + 2 H(+). Functionally, catalyzes the methylthiolation of an aspartic acid residue of ribosomal protein uS12. This is Ribosomal protein uS12 methylthiotransferase RimO from Vibrio cholerae serotype O1 (strain ATCC 39315 / El Tor Inaba N16961).